Here is a 319-residue protein sequence, read N- to C-terminus: Aliphatic sulfonates import ATP-binding protein SsuB 1 (319 aa).

Residues 63 to 282 form the ABC transporter domain; sequence VTLSGVSKRF…ARASAAFAAL (220 aa). 95–102 contacts ATP; it reads GRSGCGKS.

Belongs to the ABC transporter superfamily. Aliphatic sulfonates importer (TC 3.A.1.17.2) family. As to quaternary structure, the complex is composed of two ATP-binding proteins (SsuB), two transmembrane proteins (SsuC) and a solute-binding protein (SsuA).

It localises to the cell inner membrane. It catalyses the reaction ATP + H2O + aliphatic sulfonate-[sulfonate-binding protein]Side 1 = ADP + phosphate + aliphatic sulfonateSide 2 + [sulfonate-binding protein]Side 1.. Part of the ABC transporter complex SsuABC involved in aliphatic sulfonates import. Responsible for energy coupling to the transport system. This is Aliphatic sulfonates import ATP-binding protein SsuB 1 from Burkholderia cenocepacia (strain HI2424).